The chain runs to 145 residues: NADH-ubiquinone oxidoreductase subunit 8 (145 aa).

2 4Fe-4S ferredoxin-type domains span residues L43–G73 and D83–F112. C53, C56, C59, C63, C92, C95, C98, and C102 together coordinate [4Fe-4S] cluster.

The protein belongs to the complex I 23 kDa subunit family. [4Fe-4S] cluster is required as a cofactor.

The protein localises to the mitochondrion. The enzyme catalyses a ubiquinone + NADH + 5 H(+)(in) = a ubiquinol + NAD(+) + 4 H(+)(out). In terms of biological role, core subunit of the mitochondrial membrane respiratory chain NADH dehydrogenase (Complex I) that is believed to belong to the minimal assembly required for catalysis. Complex I functions in the transfer of electrons from NADH to the respiratory chain. The immediate electron acceptor for the enzyme is believed to be ubiquinone. May donate electrons to ubiquinone. The chain is NADH-ubiquinone oxidoreductase subunit 8 (M-ISP1) from Trypanosoma brucei brucei.